We begin with the raw amino-acid sequence, 164 residues long: Dihydrofolate reductase (164 aa).

The DHFR domain occupies 2-162 (NISIIVAMSQ…FYVTFKILKK (161 aa)). 6 to 8 (IVA) is a substrate binding site. Residues 7–8 (VA) and 15–20 (IGQKNS) each bind NADP(+). Asp28 is a binding site for substrate. 44–47 (GRKT) contacts NADP(+). Position 58 (Arg58) interacts with substrate. Residues 63–66 (LTRQ) and 96–101 (IGGSNL) contribute to the NADP(+) site. Thr115 contacts substrate.

It belongs to the dihydrofolate reductase family.

It catalyses the reaction (6S)-5,6,7,8-tetrahydrofolate + NADP(+) = 7,8-dihydrofolate + NADPH + H(+). The protein operates within cofactor biosynthesis; tetrahydrofolate biosynthesis; 5,6,7,8-tetrahydrofolate from 7,8-dihydrofolate: step 1/1. Key enzyme in folate metabolism. Catalyzes an essential reaction for de novo glycine and purine synthesis, and for DNA precursor synthesis. The sequence is that of Dihydrofolate reductase (folA) from Buchnera aphidicola subsp. Baizongia pistaciae (strain Bp).